We begin with the raw amino-acid sequence, 87 residues long: Exodeoxyribonuclease 7 small subunit (87 aa).

It belongs to the XseB family. In terms of assembly, heterooligomer composed of large and small subunits.

The protein localises to the cytoplasm. It carries out the reaction Exonucleolytic cleavage in either 5'- to 3'- or 3'- to 5'-direction to yield nucleoside 5'-phosphates.. Bidirectionally degrades single-stranded DNA into large acid-insoluble oligonucleotides, which are then degraded further into small acid-soluble oligonucleotides. The polypeptide is Exodeoxyribonuclease 7 small subunit (Pelotomaculum thermopropionicum (strain DSM 13744 / JCM 10971 / SI)).